We begin with the raw amino-acid sequence, 125 residues long: MFPGGKMNPRMMKQMQKMMKDFGMDSEDLKAVKVTIELEDKIMVFDKPKVQVMDMMGTKTYTISGRSKNTSKTAEKIEDTEVKVEVTEEDIEMVATQCNVSKEEAKTALEDVNGDLAEAILKLGN.

The NAC-A/B domain occupies 9 to 76; sequence PRMMKQMQKM…SKNTSKTAEK (68 aa).

The protein belongs to the NAC-alpha family. In terms of assembly, homodimer. Interacts with the ribosome. Binds ribosomal RNA.

Its function is as follows. Contacts the emerging nascent chain on the ribosome. This is Nascent polypeptide-associated complex protein from Methanococcus vannielii (strain ATCC 35089 / DSM 1224 / JCM 13029 / OCM 148 / SB).